Reading from the N-terminus, the 448-residue chain is Phosphoglucosamine mutase (448 aa).

Residue Ser102 is the Phosphoserine intermediate of the active site. The Mg(2+) site is built by Ser102, Asp243, Asp245, and Asp247. Ser102 is subject to Phosphoserine.

Belongs to the phosphohexose mutase family. Mg(2+) serves as cofactor. In terms of processing, activated by phosphorylation.

The catalysed reaction is alpha-D-glucosamine 1-phosphate = D-glucosamine 6-phosphate. Catalyzes the conversion of glucosamine-6-phosphate to glucosamine-1-phosphate. In Parvibaculum lavamentivorans (strain DS-1 / DSM 13023 / NCIMB 13966), this protein is Phosphoglucosamine mutase.